Consider the following 1382-residue polypeptide: Hepatocyte growth factor receptor (1382 aa).

Positions M1 to C24 are cleaved as a signal peptide. Residues E25–T933 are Extracellular-facing. Residues K27–L516 form the Sema domain. The N-linked (GlcNAc...) asparagine glycan is linked to N45. 4 cysteine pairs are disulfide-bonded: C95/C101, C98/C160, C133/C141, and C173/C176. An N-linked (GlcNAc...) asparagine glycan is attached at N106. Residues N203 and N359 are each glycosylated (N-linked (GlcNAc...) asparagine). Intrachain disulfides connect C299/C364 and C386/C398. N400 and N406 each carry an N-linked (GlcNAc...) asparagine glycan. Disulfide bonds link C521–C539, C527–C562, C530–C546, and C542–C552. IPT/TIG domains are found at residues P564 to V656, P658 to Q740, and P743 to V837. An O-linked (Man) threonine glycan is attached at T583. Residues N608 and N636 are each glycosylated (N-linked (GlcNAc...) asparagine). Residues T677 and T762 are each glycosylated (O-linked (Man) threonine). N786, N880, and N931 each carry an N-linked (GlcNAc...) asparagine glycan. The chain crosses the membrane as a helical span at residues E934–W956. Residues K957–T1382 lie on the Cytoplasmic side of the membrane. A Phosphoserine modification is found at S967. T978 carries the post-translational modification Phosphothreonine. Phosphoserine is present on residues S991, S998, and S1001. Y1004 is subject to Phosphotyrosine. The region spanning V1079 to I1346 is the Protein kinase domain. Residues I1085–V1093 and K1111 contribute to the ATP site. Catalysis depends on D1205, which acts as the Proton acceptor. The segment at L1213 to T1382 is interaction with RANBP9. At Y1231 the chain carries Phosphotyrosine. Y1235 and Y1236 each carry phosphotyrosine; by autocatalysis. Phosphothreonine is present on T1290. The tract at residues W1321 to I1360 is interaction with MUC20. Phosphotyrosine; by autocatalysis is present on residues Y1350 and Y1357. Y1366 bears the Phosphotyrosine mark.

This sequence belongs to the protein kinase superfamily. Tyr protein kinase family. As to quaternary structure, heterodimer made of an alpha chain (50 kDa) and a beta chain (145 kDa) which are disulfide linked. Binds PLXNB1. Interacts when phosphorylated with downstream effectors including STAT3, PIK3R1, SRC, PCLG1, GRB2 and GAB1. Interacts with SPSB1, SPSB2 and SPSB4. Interacts with INPP5D/SHIP1. When phosphorylated at Tyr-1357, interacts with INPPL1/SHIP2. Interacts with RANBP9 and RANBP10, as well as SPSB1, SPSB2, SPSB3 and SPSB4. SPSB1 binding occurs in the presence and in the absence of HGF, however HGF treatment has a positive effect on this interaction. Interacts with MUC20; prevents interaction with GRB2 and suppresses hepatocyte growth factor-induced cell proliferation. Interacts with GRB10. Interacts with PTPN1 and PTPN2. Interacts with tensin TNS3. Interacts (when phosphorylated) with tensin TNS4 (via SH2 domain); the interaction increases MET protein stability by inhibiting MET endocytosis and subsequent lysosomal degradation. Post-translationally, autophosphorylated in response to ligand binding on Tyr-1235 and Tyr-1236 in the kinase domain leading to further phosphorylation of Tyr-1350 and Tyr-1357 in the C-terminal multifunctional docking site. Dephosphorylated by PTPRJ at Tyr-1350 and Tyr-1366. Dephosphorylated by PTPN1 and PTPN2. Ubiquitinated. Ubiquitination by CBL regulates the receptor stability and activity through proteasomal degradation. In terms of processing, O-mannosylation of IPT/TIG domains by TMEM260 is required for protein maturation. O-mannosylated residues are composed of single mannose glycans that are not elongated or modified.

It localises to the membrane. It catalyses the reaction L-tyrosyl-[protein] + ATP = O-phospho-L-tyrosyl-[protein] + ADP + H(+). With respect to regulation, in its inactive state, the C-terminal tail interacts with the catalytic domain and inhibits the kinase activity. Upon ligand binding, the C-terminal tail is displaced and becomes phosphorylated, thus increasing the kinase activity. Its function is as follows. Receptor tyrosine kinase that transduces signals from the extracellular matrix into the cytoplasm by binding to hepatocyte growth factor/HGF ligand. Regulates many physiological processes including proliferation, scattering, morphogenesis and survival. Ligand binding at the cell surface induces autophosphorylation of MET on its intracellular domain that provides docking sites for downstream signaling molecules. Following activation by ligand, interacts with the PI3-kinase subunit PIK3R1, PLCG1, SRC, GRB2, STAT3 or the adapter GAB1. Recruitment of these downstream effectors by MET leads to the activation of several signaling cascades including the RAS-ERK, PI3 kinase-AKT, or PLCgamma-PKC. The RAS-ERK activation is associated with the morphogenetic effects while PI3K/AKT coordinates prosurvival effects. During embryonic development, MET signaling plays a role in gastrulation, development and migration of muscles and neuronal precursors, angiogenesis and kidney formation. In adults, participates in wound healing as well as organ regeneration and tissue remodeling. Also promotes differentiation and proliferation of hematopoietic cells. This Atelerix albiventris (Middle-African hedgehog) protein is Hepatocyte growth factor receptor (MET).